A 572-amino-acid polypeptide reads, in one-letter code: Serine/threonine-protein kinase pak-1 (572 aa).

Disordered stretches follow at residues 1–71 and 156–195; these read MKAF…SRPS and QPYS…QGVP. One can recognise a CRIB domain in the interval 67 to 80; it reads ISRPSNFEHTIHVG. The tract at residues 81 to 294 is linker; the sequence is YDPKTGEFTG…IVSIGNPDRK (214 aa). The segment covering 178–195 has biased composition (polar residues); sequence PMTTSTSSAGYNSKQGVP. In terms of domain architecture, Protein kinase spans 295–546; that stretch reads YRKVDKIGSG…ASQLLTHPFL (252 aa). Residues 301–309 and lysine 324 each bind ATP; that span reads IGSGASGSV. The active-site Proton acceptor is the aspartate 414.

Belongs to the protein kinase superfamily. STE Ser/Thr protein kinase family. STE20 subfamily. In terms of assembly, interacts with cdc-42 (GTP-bound form) and cedd-10 (GTP-bound form). Requires Mg(2+) as cofactor. It depends on Mn(2+) as a cofactor. In terms of tissue distribution, specifically colocalized with cdc-42 and ced-10 at all hypodermal cell boundaries during embryo elongation throughout the second phase of embryogenesis. Expressed mainly in pharyngeal muscles, the CAN neurons, motor neurons in the ventral nerve cord, several cells in the tail region (including the B and Y cells from L1 to adult, the hypodermal blast cell T in the L1 and some of its progeny in later stages), and the distal tip cells.

It is found in the cell membrane. Its subcellular location is the cytoplasm. It localises to the cell projection. The protein resides in the axon. The protein localises to the perikaryon. It catalyses the reaction L-seryl-[protein] + ATP = O-phospho-L-seryl-[protein] + ADP + H(+). It carries out the reaction L-threonyl-[protein] + ATP = O-phospho-L-threonyl-[protein] + ADP + H(+). Its function is as follows. Required for hypodermal cell fusion, together with cdc-42 and ced-10, leading to embryonic body elongation, which involves dramatic cytoskeletal reorganization. Plays a redundant role with max-2 in dorsal axonal guidance in ventral cord commissural motoneurons and in P neuroblast migration. Acts probably downstream of Rho GTPases mig-2 and ced-10 to regulate these 2 processes. Involved in orientating axonal growth of HSN neurons. During gonad morphogenesis and probably in association with pix-1 and git-1, involved in the migration of distal tip cell (DTC) and in maintaining their sharp tapering morphology. In addition, plays a redundant role with max-2 in DTC-mediated guidance of gonad elongation. May phosphorylate mlc-4. The polypeptide is Serine/threonine-protein kinase pak-1 (pak-1) (Caenorhabditis elegans).